Here is a 328-residue protein sequence, read N- to C-terminus: GMP reductase (328 aa).

The active-site Thioimidate intermediate is the cysteine 177. Isoleucine 206–valine 229 provides a ligand contact to NADP(+).

It belongs to the IMPDH/GMPR family. GuaC type 2 subfamily.

The enzyme catalyses IMP + NH4(+) + NADP(+) = GMP + NADPH + 2 H(+). In terms of biological role, catalyzes the irreversible NADPH-dependent deamination of GMP to IMP. It functions in the conversion of nucleobase, nucleoside and nucleotide derivatives of G to A nucleotides, and in maintaining the intracellular balance of A and G nucleotides. In Levilactobacillus brevis (strain ATCC 367 / BCRC 12310 / CIP 105137 / JCM 1170 / LMG 11437 / NCIMB 947 / NCTC 947) (Lactobacillus brevis), this protein is GMP reductase.